We begin with the raw amino-acid sequence, 247 residues long: Carboxy-S-adenosyl-L-methionine synthase (247 aa).

Residues Y39, 64-66 (GCS), 89-90 (DN), 117-118 (DI), N132, and R199 each bind S-adenosyl-L-methionine.

This sequence belongs to the class I-like SAM-binding methyltransferase superfamily. Cx-SAM synthase family. In terms of assembly, homodimer.

It carries out the reaction prephenate + S-adenosyl-L-methionine = carboxy-S-adenosyl-L-methionine + 3-phenylpyruvate + H2O. Its function is as follows. Catalyzes the conversion of S-adenosyl-L-methionine (SAM) to carboxy-S-adenosyl-L-methionine (Cx-SAM). The polypeptide is Carboxy-S-adenosyl-L-methionine synthase (Salmonella enteritidis PT4 (strain P125109)).